The following is a 189-amino-acid chain: dCTP deaminase, dUMP-forming (189 aa).

DCTP contacts are provided by residues 101–106, aspartate 119, 127–129, glutamine 148, tyrosine 162, and glutamine 174; these read KSSLGR and TLE. Glutamate 129 (proton donor/acceptor) is an active-site residue.

This sequence belongs to the dCTP deaminase family. As to quaternary structure, homotrimer.

It carries out the reaction dCTP + 2 H2O = dUMP + NH4(+) + diphosphate. It functions in the pathway pyrimidine metabolism; dUMP biosynthesis; dUMP from dCTP: step 1/1. Functionally, bifunctional enzyme that catalyzes both the deamination of dCTP to dUTP and the hydrolysis of dUTP to dUMP without releasing the toxic dUTP intermediate. This is dCTP deaminase, dUMP-forming from Rhodococcus opacus (strain B4).